The sequence spans 698 residues: Polyribonucleotide nucleotidyltransferase (698 aa).

Mg(2+)-binding residues include aspartate 487 and aspartate 493. Residues 555–614 enclose the KH domain; it reads PKIIQIQIDPQKIGDVVGQRGKTINAIIEQTGVKIDINDEGAVSVCGTDKDMMDKAINMI. In terms of domain architecture, S1 motif spans 624-692; that stretch reads GQVFEGKVIS…KMGRISFSIK (69 aa).

It belongs to the polyribonucleotide nucleotidyltransferase family. The cofactor is Mg(2+).

The protein resides in the cytoplasm. The catalysed reaction is RNA(n+1) + phosphate = RNA(n) + a ribonucleoside 5'-diphosphate. In terms of biological role, involved in mRNA degradation. Catalyzes the phosphorolysis of single-stranded polyribonucleotides processively in the 3'- to 5'-direction. The polypeptide is Polyribonucleotide nucleotidyltransferase (Lachnoclostridium phytofermentans (strain ATCC 700394 / DSM 18823 / ISDg) (Clostridium phytofermentans)).